Consider the following 404-residue polypeptide: Type I restriction enzyme EcoR124I/EcoR124II specificity subunit (404 aa).

Positions Met1–Lys153 are target-recognition domain 1. Residues Ser154–Gly199 are conserved region 1. Positions Glu200–Pro349 are target-recognition domain 2. Positions Asn350–Asn404 are conserved region 2.

It belongs to the type-I restriction system S methylase family. As to quaternary structure, the type I restriction/modification system is composed of three polypeptides R, M and S; the restriction enzyme has stoichiometry R(2)M(2)S(1) while the methyltransferase is M(2)S(1). There is an equilibrium between R(2)M(2)S(1) and R(1)M(2)S(1); the latter is methylation and translocation proficient but restriction deficient. (Microbial infection) Holoenenzyme interacts with Escherichia phage T7 protein Ocr; this interaction leads to the inhibition of the restriction activity, but may still allow methylation and translocation.

In terms of biological role, the specificity (S) subunit of a type I restriction enzyme; this subunit dictates DNA sequence specificity. The presence or absence of a 4-residue repeat changes the sequence specificity; a third copy of TAEL inserted at position 179-180 changes the recognition site from 5'-GAAN(6)RTCG-3' (for EcoR124I) to 5'-GAAN(7)RTCG-3' (for EcoR124II). The M and S subunits together form a methyltransferase (MTase) that methylates A-3 on the top and bottom strand of the sequence 5'-GAAN(7)RTCG-3'. In the presence of the R subunit the complex can also act as an endonuclease, binding to the same target sequence but cutting the DNA some distance from this site. Whether the DNA is cut or modified depends on the methylation state of the target sequence. When the target site is unmodified, the DNA is cut. When the target site is hemimethylated, the complex acts as a maintenance MTase modifying the DNA so that both strands become methylated. After locating a non-methylated recognition site, the enzyme complex serves as a molecular motor that translocates DNA in an ATP-dependent manner until a collision occurs that triggers cleavage. The R(1)M(2)S(1) complex translocates an average of 555 bp/second on nicked DNA; the R(2)M(2)S(1) complex translocates at double that speed. The 2 R subunit motors are independent and track along the helical pitch of the DNA, inducing positive supercoiling ahead of themselves. This Escherichia coli protein is Type I restriction enzyme EcoR124I/EcoR124II specificity subunit (hsdS).